The chain runs to 336 residues: F-box protein PP2-B1 (336 aa).

Residues 1-22 form a disordered region; it reads MEQIHGGDSNSGGGGGGSSRND. Gly residues predominate over residues 9–18; it reads SNSGGGGGGS. The F-box domain maps to 29–75; that stretch reads ASRFDALPEDCISKVISHTSPRDACVVASVSKSVKSAAQSDLVWEMF.

As to quaternary structure, part of a SCF (ASK-cullin-F-box) protein ligase complex. Interacts with SKP1A/ASK1 and SPK1B/ASK2.

It is found in the nucleus. The protein operates within protein modification; protein ubiquitination. Component of SCF(ASK-cullin-F-box) E3 ubiquitin ligase complexes, which may mediate the ubiquitination and subsequent proteasomal degradation of target proteins. This chain is F-box protein PP2-B1 (PP2B1), found in Arabidopsis thaliana (Mouse-ear cress).